Here is an 88-residue protein sequence, read N- to C-terminus: Phosphocarrier protein HPr (88 aa).

In terms of domain architecture, HPr spans 1-88 (MEQNSYVIID…DVLSKEGLTK (88 aa)). Catalysis depends on H15, which acts as the Pros-phosphohistidine intermediate. The residue at position 46 (S46) is a Phosphoserine; by HPrK/P.

The protein resides in the cytoplasm. With respect to regulation, phosphorylation on Ser-46 inhibits the phosphoryl transfer from enzyme I to HPr. General (non sugar-specific) component of the phosphoenolpyruvate-dependent sugar phosphotransferase system (sugar PTS). This major carbohydrate active-transport system catalyzes the phosphorylation of incoming sugar substrates concomitantly with their translocation across the cell membrane. The phosphoryl group from phosphoenolpyruvate (PEP) is transferred to the phosphoryl carrier protein HPr by enzyme I. Phospho-HPr then transfers it to the PTS EIIA domain. Functionally, P-Ser-HPr interacts with the catabolite control protein A (CcpA), forming a complex that binds to DNA at the catabolite response elements cre, operator sites preceding a large number of catabolite-regulated genes. Thus, P-Ser-HPr is a corepressor in carbon catabolite repression (CCR), a mechanism that allows bacteria to coordinate and optimize the utilization of available carbon sources. P-Ser-HPr also plays a role in inducer exclusion, in which it probably interacts with several non-PTS permeases and inhibits their transport activity. This Staphylococcus aureus (strain MSSA476) protein is Phosphocarrier protein HPr (ptsH).